We begin with the raw amino-acid sequence, 633 residues long: DNA mismatch repair protein MutL (633 aa).

2 disordered regions span residues 336–364 (VRPD…GEFG) and 384–405 (GWSG…TRPE). A compositionally biased stretch (low complexity) spans 388–401 (GASSSGASSGYSAY).

The protein belongs to the DNA mismatch repair MutL/HexB family.

This protein is involved in the repair of mismatches in DNA. It is required for dam-dependent methyl-directed DNA mismatch repair. May act as a 'molecular matchmaker', a protein that promotes the formation of a stable complex between two or more DNA-binding proteins in an ATP-dependent manner without itself being part of a final effector complex. The protein is DNA mismatch repair protein MutL of Pseudomonas paraeruginosa (strain DSM 24068 / PA7) (Pseudomonas aeruginosa (strain PA7)).